The chain runs to 342 residues: N-acetyl-gamma-glutamyl-phosphate reductase (342 aa).

C146 is a catalytic residue.

Belongs to the NAGSA dehydrogenase family. Type 1 subfamily.

It is found in the cytoplasm. It carries out the reaction N-acetyl-L-glutamate 5-semialdehyde + phosphate + NADP(+) = N-acetyl-L-glutamyl 5-phosphate + NADPH + H(+). Its pathway is amino-acid biosynthesis; L-arginine biosynthesis; N(2)-acetyl-L-ornithine from L-glutamate: step 3/4. Functionally, catalyzes the NADPH-dependent reduction of N-acetyl-5-glutamyl phosphate to yield N-acetyl-L-glutamate 5-semialdehyde. The polypeptide is N-acetyl-gamma-glutamyl-phosphate reductase (Streptomyces avermitilis (strain ATCC 31267 / DSM 46492 / JCM 5070 / NBRC 14893 / NCIMB 12804 / NRRL 8165 / MA-4680)).